The following is a 478-amino-acid chain: Cytochrome c-552 (478 aa).

A signal peptide spans 1–26 (MTRIKINARRIFSLLIPFFFFTSVHA). His-94 contributes to the heme c binding site. Heme contacts are provided by Cys-122, Cys-125, and Lys-126. Heme c-binding residues include Cys-160, Cys-163, His-164, Cys-209, Cys-212, and His-213. Glu-215, Tyr-216, Lys-261, and Gln-263 together coordinate Ca(2+). Tyr-216 is a substrate binding site. His-264 serves as a coordination point for substrate. The heme c site is built by His-275, Cys-282, Cys-285, His-286, His-301, Cys-314, Cys-317, His-318, and His-393.

The protein belongs to the cytochrome c-552 family. The cofactor is Ca(2+). Heme c serves as cofactor.

The protein localises to the periplasm. It catalyses the reaction 6 Fe(III)-[cytochrome c] + NH4(+) + 2 H2O = 6 Fe(II)-[cytochrome c] + nitrite + 8 H(+). The protein operates within nitrogen metabolism; nitrate reduction (assimilation). Catalyzes the reduction of nitrite to ammonia, consuming six electrons in the process. The polypeptide is Cytochrome c-552 (Escherichia coli O6:H1 (strain CFT073 / ATCC 700928 / UPEC)).